A 240-amino-acid polypeptide reads, in one-letter code: Orotidine 5'-phosphate decarboxylase (240 aa).

Residues D10, K32, 59-68, T122, R183, Q192, G212, and R213 contribute to the substrate site; that span reads DLKLHDIPNT. K61 (proton donor) is an active-site residue.

Belongs to the OMP decarboxylase family. Type 1 subfamily. Homodimer.

The catalysed reaction is orotidine 5'-phosphate + H(+) = UMP + CO2. The protein operates within pyrimidine metabolism; UMP biosynthesis via de novo pathway; UMP from orotate: step 2/2. Its function is as follows. Catalyzes the decarboxylation of orotidine 5'-monophosphate (OMP) to uridine 5'-monophosphate (UMP). This Carboxydothermus hydrogenoformans (strain ATCC BAA-161 / DSM 6008 / Z-2901) protein is Orotidine 5'-phosphate decarboxylase.